We begin with the raw amino-acid sequence, 130 residues long: MSQAQYAGTGRRKNAVARVRLVPGTGKITVNKKDVEEYIPHADLRLVINQPFAVTSTVGSYDVFVNVVGGGYAGQSGAIRHGIARALLQVDPDFRDSLKRAGLLTRDSRKVERKKPGLKKARKASQFSKR.

A disordered region spans residues Arg106–Arg130. A compositionally biased stretch (basic residues) spans Val111–Arg130.

Belongs to the universal ribosomal protein uS9 family.

The chain is Small ribosomal subunit protein uS9 from Streptococcus pneumoniae serotype 2 (strain D39 / NCTC 7466).